We begin with the raw amino-acid sequence, 143 residues long: Peptide methionine sulfoxide reductase MsrB (143 aa).

The MsrB domain occupies 16 to 139; the sequence is DAELRRRLTP…NSAALNFESR (124 aa). Positions 55, 58, 104, and 107 each coordinate Zn(2+). Cys128 serves as the catalytic Nucleophile.

Belongs to the MsrB Met sulfoxide reductase family. It depends on Zn(2+) as a cofactor.

It carries out the reaction L-methionyl-[protein] + [thioredoxin]-disulfide + H2O = L-methionyl-(R)-S-oxide-[protein] + [thioredoxin]-dithiol. The chain is Peptide methionine sulfoxide reductase MsrB from Burkholderia ambifaria (strain MC40-6).